Reading from the N-terminus, the 520-residue chain is RNA polymerase sigma factor sigA (520 aa).

The N-terminal 66 residues, 1–66 (MTATPAVIGL…APATPKLTAV (66 aa)), are a transit peptide targeting the chloroplast. Residues 37-49 (GGGGGGGGGGGGD) show a composition bias toward gly residues. Disordered regions lie at residues 37–57 (GGGGGGGGGGGGDAMSFAPPA), 87–117 (HHSSAAAALAPPPPPPPPPTPSPASRAAHAH), and 171–190 (SVSARQRRMSGRRRGRTKNG). The span at 96–108 (APPPPPPPPPTPS) shows a compositional bias: pro residues. The span at 175-187 (RQRRMSGRRRGRT) shows a compositional bias: basic residues. A Polymerase core binding motif is present at residues 305-318 (DLIQGGLIGLLRGI). The H-T-H motif DNA-binding region spans 479-498 (WEDISRQFGLSRERVRQVGL).

Belongs to the sigma-70 factor family. In terms of tissue distribution, expressed in shoots. Expressed in the tips of fully elongated leaves. Expressed in leaf blades.

It is found in the plastid. It localises to the chloroplast. In terms of biological role, sigma factors are initiation factors that promote the attachment of plastid-encoded RNA polymerase (PEP) to specific initiation sites and are then released. Controls the transcription of the psaA and psaB genes in chloroplast, and thus maintains the abundance of the core protein complex PsaA-PsaB of photosystem I (PSI) in the thylakoid membrane. Maintains PSI activity, sufficient rate of electron transfer from PSII to PSI, and photochemical efficiency. The polypeptide is RNA polymerase sigma factor sigA (Oryza sativa subsp. japonica (Rice)).